Consider the following 224-residue polypeptide: Respiratory supercomplex factor 2, mitochondrial (224 aa).

The Mitochondrial intermembrane portion of the chain corresponds to 1 to 13 (MKILTQDEIEAHR). The chain crosses the membrane as a helical span at residues 14–38 (SHTLKGGIEGALAGFAISAIIFKVL). Over 39-47 (PRRYPKFKP) the chain is Mitochondrial matrix. A helical transmembrane segment spans residues 48-75 (STLTWSIKTALWITPPTVLTAICAEEAS). The Mitochondrial intermembrane portion of the chain corresponds to 76-103 (NNFDATMYGSGSSSEDALDEHRRWKSLS). The HIG1 domain maps to 89-180 (SEDALDEHRR…YENKLHPNKQ (92 aa)). A helical transmembrane segment spans residues 104 to 133 (TKDKFVEGLSNNKYKIITGAWAASLYGSWV). Over 134 to 142 (IVNKDPIMT) the chain is Mitochondrial matrix. A helical membrane pass occupies residues 143-173 (KAQKIVQARMYAQFITVGLLLASVGLSMYEN). The Mitochondrial intermembrane portion of the chain corresponds to 174–184 (KLHPNKQKVNE). A helical transmembrane segment spans residues 185–204 (MRRWENALRVAEEEERLEKE). The Mitochondrial matrix portion of the chain corresponds to 205-224 (GRRTGYVSNEERINSKIFKS).

Associates with a subpopulation of the cytochrome bc1-cytochrome c oxidase supercomplexes. Associates in substoichiometric amounts with complex IV. Interacts with COX3.

It localises to the mitochondrion membrane. Assembly factor that plays a role in the assembly of the respiratory chain supercomplexes (SCs) composed of ubiquinol-cytochrome c oxidoreductase (cytochrome b-c1 complex, complex III, CIII) and cytochrome c oxidase (complex IV, CIV). May be required for late-stage assembly of the COX12 and COX13 subunits. Required for the generation and maintenance of a normal proton motive force (PMF) across the inner mitochondrial membrane (IMM) by preventing proton leakage through an inactive population of CIV that accumulates when RCF1 and/or RCF2 proteins are absent. This chain is Respiratory supercomplex factor 2, mitochondrial (RCF2), found in Saccharomyces cerevisiae (strain ATCC 204508 / S288c) (Baker's yeast).